The sequence spans 1116 residues: DNA-directed RNA polymerase subunit beta (1116 aa).

Residues 1070–1100 show a composition bias toward basic and acidic residues; the sequence is KIREEEKEREKEREAREMEDPEKIVSKIDAK. A disordered region spans residues 1070–1116; sequence KIREEEKEREKEREAREMEDPEKIVSKIDAKQKKKYKKTKKQTEKKK. Residues 1101 to 1116 show a composition bias toward basic residues; sequence QKKKYKKTKKQTEKKK.

The protein belongs to the RNA polymerase beta chain family. As to quaternary structure, in plastids the minimal PEP RNA polymerase catalytic core is composed of four subunits: alpha, beta, beta', and beta''. When a (nuclear-encoded) sigma factor is associated with the core the holoenzyme is formed, which can initiate transcription.

It localises to the plastid. The protein resides in the chloroplast. The enzyme catalyses RNA(n) + a ribonucleoside 5'-triphosphate = RNA(n+1) + diphosphate. DNA-dependent RNA polymerase catalyzes the transcription of DNA into RNA using the four ribonucleoside triphosphates as substrates. This chain is DNA-directed RNA polymerase subunit beta, found in Heterosigma akashiwo (Chromophytic alga).